A 257-amino-acid polypeptide reads, in one-letter code: 3-alpha-hydroxysteroid dehydrogenase/carbonyl reductase (257 aa).

NAD(+) contacts are provided by residues 8-13 (GCATGI), Asp-32, 41-42 (DL), and Gly-71. Ser-114 provides a ligand contact to substrate. Residues Tyr-155 and Lys-159 each coordinate NAD(+). Catalysis depends on Tyr-155, which acts as the Proton acceptor.

The protein belongs to the short-chain dehydrogenases/reductases (SDR) family. Homodimer.

It is found in the cytoplasm. The catalysed reaction is a 3alpha-hydroxysteroid + NADP(+) = a 3-oxosteroid + NADPH + H(+). It catalyses the reaction a 3alpha-hydroxysteroid + NAD(+) = a 3-oxosteroid + NADH + H(+). Its function is as follows. Catalyzes the reversible interconversion of hydroxy and oxo groups at position 3 of the steroid nucleus. Along with the 3 alpha-hydroxysteroid dehydrogenase and 3-oxo-reductase activities towards a variety of cis or trans fused A/B ring steroids, it also reduces several xenobiotic carbonyl compounds, including a metyrapone-based class of insecticides, to the respective alcohol metabolites. No detectable activity on testosterone, progesterone or 3-oxo-desogestrel. The polypeptide is 3-alpha-hydroxysteroid dehydrogenase/carbonyl reductase (hsdA) (Comamonas testosteroni (Pseudomonas testosteroni)).